Here is a 793-residue protein sequence, read N- to C-terminus: WASP homolog-associated protein with actin, membranes and microtubules (793 aa).

Positions 1–253 (MDSEQPDSLD…EVATSCKLGI (253 aa)) are mediates association with membranes. The interval 254-623 (LKSLDEDELG…FVPVSDQTLS (370 aa)) is mediates interaction with microtubules. Coiled coils occupy residues 265–290 (RRVA…SIQD) and 445–503 (LGDN…LHQH). Disordered stretches follow at residues 556 to 661 (SMVS…SFQG) and 675 to 699 (EDRP…PGSM). The segment covering 566–579 (SQKRLSTAHHHKTA) has biased composition (basic residues). Positions 618–628 (SDQTLSGSSED) are enriched in polar residues. The segment at 624–793 (GSSEDLSLPP…DEPSPTEWDR (170 aa)) is mediates actin nucleation. A compositionally biased stretch (pro residues) spans 632–654 (PPQPPAPPLPPPPPPPPPPPLPP). 2 WH2 domains span residues 698-716 (SMDE…LRKV) and 728-745 (VNEQ…LKKV). Residues 755-785 (KKSTSDLERSIREALERIKKVSADSEEDNDE) adopt a coiled-coil conformation. The disordered stretch occupies residues 772–793 (IKKVSADSEEDNDEPSPTEWDR). A compositionally biased stretch (acidic residues) spans 778 to 787 (DSEEDNDEPS). The residue at position 779 (serine 779) is a Phosphoserine.

As to quaternary structure, interacts with ACTR3; indicative for an association with the ARP2/3 complex. Associates with microtubules; in vitro binds to tubulin heterodimer in a 1:1 stoichiometry; decorates microtubules with a repeat of 80 A along protofilaments. Interacts with RHOD (in GTP-bound form).

The protein localises to the cytoplasm. It localises to the endoplasmic reticulum-Golgi intermediate compartment. It is found in the cytoplasmic vesicle membrane. The protein resides in the golgi apparatus. Its subcellular location is the cis-Golgi network. Acts as a nucleation-promoting factor (NPF) that stimulates Arp2/3-mediated actin polymerization both at the Golgi apparatus and along tubular membranes. Involved as a regulator of Golgi positioning and morphology. Its activity in membrane tubulation requires F-actin and interaction with microtubules. Proposed to use coordinated actin-nucleating and microtubule-binding activities of distinct WHAMM molecules to drive membrane tubule elongation; when MT-bound can recruit and remodel membrane vesicles but is prevented to activate the Arp2/3 complex. Required for RhoD-dependent actin reorganization such as in cell adhesion and cell migration. Participates in vesicle transport between the endoplasmic reticulum and the Golgi complex. This chain is WASP homolog-associated protein with actin, membranes and microtubules (Whamm), found in Mus musculus (Mouse).